The sequence spans 251 residues: Osmotin-like protein (251 aa).

Positions 1-21 (MSHLTTFLVFFLLAFVTYTYA) are cleaved as a signal peptide. 8 cysteine pairs are disulfide-bonded: C31-C226, C73-C83, C88-C94, C142-C214, C147-C197, C155-C165, C169-C178, and C179-C184. A glycan (N-linked (GlcNAc...) asparagine) is linked at N233.

The protein belongs to the thaumatin family.

In Nicotiana tabacum (Common tobacco), this protein is Osmotin-like protein (OLPA).